A 188-amino-acid polypeptide reads, in one-letter code: mRNA transport factor GFD1 (188 aa).

Residues 1-128 (MPLESIWADA…KTQSKQDTAS (128 aa)) are disordered. The span at 18–28 (KQKPSHKRSNN) shows a compositional bias: basic residues. Low complexity predominate over residues 29–44 (NKKNNNSRWSNESSSN). The segment covering 59–79 (GNHESKTKNKIKETLPREKKP) has biased composition (basic and acidic residues). 3 positions are modified to phosphoserine: S87, S106, and S111. Residues 112-128 (PSKMKTTKTQSKQDTAS) show a composition bias toward low complexity. Residues 119-164 (KTQSKQDTASKMKLLKKKIEEQREILQKTHHKNQQQQVLMDFLNDE) are a coiled coil.

In terms of assembly, interacts with GLE1, NUP42, NAB2, ZDS1 and probably DBP5. Forms a complex with GLE1 and NAB2.

It is found in the cytoplasm. The protein resides in the nucleus. The protein localises to the nuclear pore complex. Its subcellular location is the nucleus membrane. In terms of biological role, high-copy suppressor of mutant alleles of ATP-dependent RNA helicase DBP5, which is involved in mRNA export from the nucleus. It may also play an important role in a late stage of NAB2-mRNA export. The protein is mRNA transport factor GFD1 (GFD1) of Saccharomyces cerevisiae (strain ATCC 204508 / S288c) (Baker's yeast).